Reading from the N-terminus, the 1143-residue chain is DNA-directed RNA polymerase subunit beta (1143 aa).

Belongs to the RNA polymerase beta chain family. In terms of assembly, in plastids the minimal PEP RNA polymerase catalytic core is composed of four subunits: alpha, beta, beta', and beta''. When a (nuclear-encoded) sigma factor is associated with the core the holoenzyme is formed, which can initiate transcription.

Its subcellular location is the plastid. The protein resides in the chloroplast. It carries out the reaction RNA(n) + a ribonucleoside 5'-triphosphate = RNA(n+1) + diphosphate. In terms of biological role, DNA-dependent RNA polymerase catalyzes the transcription of DNA into RNA using the four ribonucleoside triphosphates as substrates. This chain is DNA-directed RNA polymerase subunit beta, found in Pyropia yezoensis (Susabi-nori).